Consider the following 285-residue polypeptide: Bark agglutinin I polypeptide A (285 aa).

The N-terminal stretch at 1 to 31 (MTSYNFKTQTSFPLLLSISFFFLLLLNKVNS) is a signal peptide. N-linked (GlcNAc...) asparagine glycosylation is present at Asn147. Positions 156 and 158 each coordinate Mn(2+). Ca(2+) contacts are provided by Asp158, Phe160, Asn162, and Asp166. Residues Asp166 and His171 each coordinate Mn(2+). Asn188 carries an N-linked (GlcNAc...) asparagine glycan.

Belongs to the leguminous lectin family. In terms of assembly, RPbAI is composed of two polypeptides, A and B, that associate into five different tetrameric isolectins. The A4 combination is the only one devoid of agglutination activity. Isoform B4 displays maximal agglutination activity. In terms of tissue distribution, strong expression in seed. Lower levels in the flower, and the bark of the roots. No expression in leaf. The lectin accumulates in the inner bark in autumn.

Its function is as follows. N-acetyl-D-galactosamine specific lectin. Bark lectins are storage protein that probably maintains stocks of nitrogen during dormant period. Self-aggregatable molecules that can bind their own carbohydrate side chains. They could also play a role in the plant's defense against phytophagous invertebrates or herbivorous higher animals. The protein is Bark agglutinin I polypeptide A of Robinia pseudoacacia (Black locust).